Here is a 72-residue protein sequence, read N- to C-terminus: UPF0270 protein YheU (72 aa).

This sequence belongs to the UPF0270 family.

The polypeptide is UPF0270 protein YheU (Salmonella choleraesuis (strain SC-B67)).